Here is a 341-residue protein sequence, read N- to C-terminus: Phenylalanine--tRNA ligase alpha subunit (341 aa).

Glu-256 is a Mg(2+) binding site.

It belongs to the class-II aminoacyl-tRNA synthetase family. Phe-tRNA synthetase alpha subunit type 1 subfamily. In terms of assembly, tetramer of two alpha and two beta subunits. Requires Mg(2+) as cofactor.

The protein resides in the cytoplasm. The enzyme catalyses tRNA(Phe) + L-phenylalanine + ATP = L-phenylalanyl-tRNA(Phe) + AMP + diphosphate + H(+). The protein is Phenylalanine--tRNA ligase alpha subunit of Chlamydia abortus (strain DSM 27085 / S26/3) (Chlamydophila abortus).